The sequence spans 196 residues: Imidazoleglycerol-phosphate dehydratase (196 aa).

This sequence belongs to the imidazoleglycerol-phosphate dehydratase family.

The protein localises to the cytoplasm. The enzyme catalyses D-erythro-1-(imidazol-4-yl)glycerol 3-phosphate = 3-(imidazol-4-yl)-2-oxopropyl phosphate + H2O. It participates in amino-acid biosynthesis; L-histidine biosynthesis; L-histidine from 5-phospho-alpha-D-ribose 1-diphosphate: step 6/9. This chain is Imidazoleglycerol-phosphate dehydratase, found in Halobacterium salinarum (strain ATCC 700922 / JCM 11081 / NRC-1) (Halobacterium halobium).